Reading from the N-terminus, the 349-residue chain is 6-phosphogluconolactonase (349 aa).

Positions 125–151 are disordered; the sequence is LQSPVSEAAHTGKGPHERQEKPHTHYA. Basic and acidic residues predominate over residues 138-147; sequence GPHERQEKPH.

Belongs to the cycloisomerase 2 family.

It catalyses the reaction 6-phospho-D-glucono-1,5-lactone + H2O = 6-phospho-D-gluconate + H(+). It functions in the pathway carbohydrate degradation; pentose phosphate pathway; D-ribulose 5-phosphate from D-glucose 6-phosphate (oxidative stage): step 2/3. Functionally, catalyzes the hydrolysis of 6-phosphogluconolactone to 6-phosphogluconate. In Bacillus subtilis (strain 168), this protein is 6-phosphogluconolactonase (pgl).